The following is a 494-amino-acid chain: NADH-quinone oxidoreductase subunit N (494 aa).

Transmembrane regions (helical) follow at residues 9–29 (VIPEIFLAAATCAILLIDLFL), 36–56 (LTYVLSLATLVVCAVLSLSDF), 73–93 (PMSNLLKFCTYIAVGLTLVYS), 107–127 (LGGEFYILSLFTVLGQMVMMS), 131–151 (FLIIYLGLEIMSLSLYALVAF), 166–186 (FVLGALASGFLLYGISMLYGA), 209–229 (LIFGLVFVVAGLAFKLGAVPF), 241–261 (PTAVTLMLGGAPKLAAFAITI), 278–298 (MLTILSVLSMAIGNITAIMQT), 304–324 (LAYSTISQVGFILLGLLSGVV), 339–359 (MFYVITYVLTTLGMFGVIMLL), 382–402 (FAFVTLLLMFSLAGVPPVVGF), 416–436 (GQIWLAVVAVLFSLIGAFYYL), and 469–489 (ALLALGLVPGPLMTACAAAII).

It belongs to the complex I subunit 2 family. As to quaternary structure, NDH-1 is composed of 14 different subunits. Subunits NuoA, H, J, K, L, M, N constitute the membrane sector of the complex.

It is found in the cell inner membrane. It carries out the reaction a quinone + NADH + 5 H(+)(in) = a quinol + NAD(+) + 4 H(+)(out). Functionally, NDH-1 shuttles electrons from NADH, via FMN and iron-sulfur (Fe-S) centers, to quinones in the respiratory chain. The immediate electron acceptor for the enzyme in this species is believed to be ubiquinone. Couples the redox reaction to proton translocation (for every two electrons transferred, four hydrogen ions are translocated across the cytoplasmic membrane), and thus conserves the redox energy in a proton gradient. The protein is NADH-quinone oxidoreductase subunit N of Herminiimonas arsenicoxydans.